A 263-amino-acid chain; its full sequence is Endonuclease 8 (263 aa).

The active-site Schiff-base intermediate with DNA is Pro2. Glu3 functions as the Proton donor in the catalytic mechanism. The active-site Proton donor; for beta-elimination activity is Lys53. Positions 70, 125, and 169 each coordinate DNA. The FPG-type zinc-finger motif lies at 229 to 263; sequence KVFHRDGEACERCGGIIEKTTLSSRPFYWCPHCQK. Catalysis depends on Arg253, which acts as the Proton donor; for delta-elimination activity.

The protein belongs to the FPG family. Zn(2+) serves as cofactor.

The enzyme catalyses 2'-deoxyribonucleotide-(2'-deoxyribose 5'-phosphate)-2'-deoxyribonucleotide-DNA = a 3'-end 2'-deoxyribonucleotide-(2,3-dehydro-2,3-deoxyribose 5'-phosphate)-DNA + a 5'-end 5'-phospho-2'-deoxyribonucleoside-DNA + H(+). Functionally, involved in base excision repair of DNA damaged by oxidation or by mutagenic agents. Acts as a DNA glycosylase that recognizes and removes damaged bases. Has a preference for oxidized pyrimidines, such as thymine glycol, 5,6-dihydrouracil and 5,6-dihydrothymine. Has AP (apurinic/apyrimidinic) lyase activity and introduces nicks in the DNA strand. Cleaves the DNA backbone by beta-delta elimination to generate a single-strand break at the site of the removed base with both 3'- and 5'-phosphates. This is Endonuclease 8 from Salmonella enteritidis PT4 (strain P125109).